Here is a 211-residue protein sequence, read N- to C-terminus: MAEQHGAPEQAAASKSHGGLGGSYKVTVYELENFQGKRCELSAECPNLTESLLQKVGSIQVESGPWLAFERRAFRGEQFVLEKGDYPRWDAWSSSRRSDILLSLRPLHIDGPDHKLHLFENPAFSGRKMEIVDDDVPSLWAHGFQDRVASIRVINGTWVGYEFPGYRGRQYVFERGEFRHWNEWDANQPQLQSVRRIRDQKWHKRGCFLSS.

Met1 is modified (N-acetylmethionine). Position 2 is an N-acetylalanine; in Beta-crystallin B3, N-terminally processed (Ala2). The N-terminal arm stretch occupies residues 2–23 (AEQHGAPEQAAASKSHGGLGGS). 2 Beta/gamma crystallin 'Greek key' domains span residues 24–63 (YKVT…QVES) and 64–108 (GPWL…RPLH). Residues 109–113 (IDGPD) are connecting peptide. Beta/gamma crystallin 'Greek key' domains lie at 114 to 155 (HKLH…RVIN) and 156 to 198 (GTWV…RRIR). The segment at 200 to 211 (QKWHKRGCFLSS) is C-terminal arm.

This sequence belongs to the beta/gamma-crystallin family. As to quaternary structure, homo/heterodimer, or complexes of higher-order. The structure of beta-crystallin oligomers seems to be stabilized through interactions between the N-terminal arms.

Crystallins are the dominant structural components of the vertebrate eye lens. The protein is Beta-crystallin B3 (Crybb3) of Rattus norvegicus (Rat).